A 281-amino-acid polypeptide reads, in one-letter code: DegV domain-containing protein (281 aa).

The DegV domain occupies 3–280 (WKIVSDSGCD…EGGLLMGYEI (278 aa)). Residues S63 and S91 each contribute to the hexadecanoate site.

Functionally, may bind long-chain fatty acids, such as palmitate, and may play a role in lipid transport or fatty acid metabolism. The chain is DegV domain-containing protein from Streptococcus gordonii.